The following is a 504-amino-acid chain: PE-PGRS family protein PE_PGRS62 (504 aa).

The PE domain occupies 4 to 94; that stretch reads VVTVPEAVAA…AAYLNTESAN (91 aa).

The protein belongs to the mycobacterial PE family. PGRS subfamily. As to quaternary structure, interacts with host Toll-like receptor 2 (TLR2).

Its subcellular location is the secreted. The protein resides in the cell wall. In terms of biological role, supports mycobacterial virulence via inhibition of phagosome maturation and host inducible nitric oxide synthase (iNOS) expression. May promote the survival within macrophages by disturbing the cytokines profiles and blocking the endoplasmic reticulum (ER) stress-mediated apoptosis. May also affect bacterial cell wall composition. Expression in Mycobacterium smegmatis, a nonpathogenic species naturally deficient in PE_PGRS genes, results in enhanced resistance to various in vitro stresses. It also leads to phagosome maturation arrest and increased survival in macrophages. This chain is PE-PGRS family protein PE_PGRS62, found in Mycobacterium tuberculosis (strain ATCC 25618 / H37Rv).